The primary structure comprises 523 residues: MSQQVIIFDTTLRDGEQALQASLSVKEKLQIALALERMGVDVMEVGFPVSSPGDFESVQTIARQVKNSRVCALARCVEKDIDVAAESLKVAEAFRIHTFIATSPMHIATKLRSTLDEVIERAIYMVKRARNYTDDVEFSCEDAGRTPIADLARVVEAAINAGATTINIPDTVGYTMPFEFAGIISGLYERVPNIDKAIISVHTHDDLGLAVGNSLAAVHAGARQVEGAMNGIGERAGNCSLEEVIMAIKVRKDILNVHTAINHQEIWRTSQLVSQICNMPIPANKAIVGSGAFAHSSGIHQDGVLKNRENYEIMTPESIGLNQIQLNLTSRSGRAAVKHRMDEMGYKESEYNLDNLYDAFLKLADKKGQVFDYDLEALAFIGKQQEEPEHFRLDYFSVQSGSNDIATAAVKLACGEEVKAEVANGNGPVDAVYQAINRITDYNVELVKYSLTAKGHGKDALGQVDIVANYNGRRFHGVGLATDIVESSAKAMVHVLNNIWRAAEVEKELQRKAQHNENNKETV.

One can recognise a Pyruvate carboxyltransferase domain in the interval Val-5–Trp-267. Mn(2+)-binding residues include Asp-14, His-202, His-204, and Asn-238. Positions Arg-392–Val-523 are regulatory domain.

Belongs to the alpha-IPM synthase/homocitrate synthase family. LeuA type 1 subfamily. In terms of assembly, homodimer. It depends on Mn(2+) as a cofactor.

The protein localises to the cytoplasm. The enzyme catalyses 3-methyl-2-oxobutanoate + acetyl-CoA + H2O = (2S)-2-isopropylmalate + CoA + H(+). It functions in the pathway amino-acid biosynthesis; L-leucine biosynthesis; L-leucine from 3-methyl-2-oxobutanoate: step 1/4. In terms of biological role, catalyzes the condensation of the acetyl group of acetyl-CoA with 3-methyl-2-oxobutanoate (2-ketoisovalerate) to form 3-carboxy-3-hydroxy-4-methylpentanoate (2-isopropylmalate). This is 2-isopropylmalate synthase from Escherichia coli O127:H6 (strain E2348/69 / EPEC).